A 542-amino-acid polypeptide reads, in one-letter code: Chaperonin GroEL (542 aa).

ATP is bound by residues 29 to 32, Lys50, 86 to 90, Gly413, 477 to 479, and Asp493; these read TLGP, DGTTT, and NAA.

Belongs to the chaperonin (HSP60) family. Forms a cylinder of 14 subunits composed of two heptameric rings stacked back-to-back. Interacts with the co-chaperonin GroES.

It is found in the cytoplasm. It catalyses the reaction ATP + H2O + a folded polypeptide = ADP + phosphate + an unfolded polypeptide.. Its function is as follows. Together with its co-chaperonin GroES, plays an essential role in assisting protein folding. The GroEL-GroES system forms a nano-cage that allows encapsulation of the non-native substrate proteins and provides a physical environment optimized to promote and accelerate protein folding. The chain is Chaperonin GroEL from Solibacter usitatus (strain Ellin6076).